The primary structure comprises 531 residues: Type 2 DNA topoisomerase 6 subunit B (531 aa).

ATP contacts are provided by residues N42, D76, 97-98 (SK), 106-113 (GMYGLGVK), and K427.

It belongs to the TOP6B family. In terms of assembly, homodimer. Heterotetramer of two Top6A and two Top6B chains.

It carries out the reaction ATP-dependent breakage, passage and rejoining of double-stranded DNA.. Relaxes both positive and negative superturns and exhibits a strong decatenase activity. The protein is Type 2 DNA topoisomerase 6 subunit B of Metallosphaera sedula (strain ATCC 51363 / DSM 5348 / JCM 9185 / NBRC 15509 / TH2).